Reading from the N-terminus, the 914-residue chain is MDGAAVGLRVLLGLGLVSLLTLEAMPAAWGLATTGRPRAREKRQAVDTTPDGVLVKSLKVNCKVTSRFAHYIITSQVVNRQPNEAREVAFDVEIPKTAFISDFAITADGNTFIGDIKDKASAWKQYRKAISGENAGLVRTSGRNMEQFTIHITVGAQSKATFQLTYEEVLKRRLTQYDIVIKVKPKQLVQHFEIDVDIFEPQGISKLDAQASFLSKELAAQTIKESFSGKKGHVLFRPTVSQQQQPCPTCSTSWLNGDFKVTYDVNRDKLCDLLVANNYFAHFFAPKNLTNMSKNLVFVIDISGSMEGQKVKQTKEALLKILGDVKPGDSFDLVLFGSRVQSWKGSLVPATQANLQAAQDFVRRFSLAGATNLNGGLLRGIEILNKAQGSHPELSSPASILIMLTDGEPTEGETDRSQILKNVRNAIRGRFPLYNLGFGHDLDFNFLEVMSMENSGWAQRIYEDHDATQQLQGFYNQVANPLLTDVELQYPQDSVLSLTQHRHKQYYDGSEIVVAGRIADHKLSTFKADVRARGERQEFKATCLVDEEEMKKLLRERGHMLENHVERLWAYLTIQELLAKRMKMEGEERANLSSQALKMSLDYQFVTPLTSMTIRGLTDEDGLEPTIDKTPEDSQPLVKVGPRRTFVLSATQPSPTARSSVVSKLPNQVTGVDTDPHFIIYVPQKEDSLCFNINEEPGVILSLVQDPDTGFSVNGQLIGSKPSRPGQHEATYFGRLGISNPPSDFQLEVTPRNITLNPSSGGPVFSWRDQATPQKDGVLVTINKKRNLVVSVEDGATFEIVLHRTWKGSAAHQDFLGFYVLDSSRMSARTRGLLGQFFCPLDFEVSDIRPGSDPMKLDATMRVKNRQLAVTRGLQRDYSKDPRHGTEVSCWFIHNNGAGLIDGVHTDYIVPDIF.

The first 30 residues, 1-30 (MDGAAVGLRVLLGLGLVSLLTLEAMPAAWG), serve as a signal peptide directing secretion. The propeptide occupies 31 to 36 (LATTGR). Residues 39-168 (AREKRQAVDT…KATFQLTYEE (130 aa)) enclose the VIT domain. The S-linked (Hex...) cysteine glycan is linked to Cys-62. Ser-131 is modified (phosphoserine). Residues Asn-288 and Asn-291 are each glycosylated (N-linked (GlcNAc...) asparagine). One can recognise a VWFA domain in the interval 293 to 453 (SKNLVFVIDI…FNFLEVMSME (161 aa)). Phosphothreonine is present on residues Thr-405 and Thr-410. N-linked (GlcNAc...) asparagine glycosylation is present at Asn-591. O-linked (GalNAc...) threonine glycosylation is present at Thr-656. Position 675 is an aspartate 1-(chondroitin 4-sulfate)-ester (Asp-675). The propeptide occupies 676-914 (PHFIIYVPQK…HTDYIVPDIF (239 aa)).

This sequence belongs to the ITIH family. I-alpha-I plasma protease inhibitors are assembled from one or two heavy chains (HC) and one light chain, bikunin. Inter-alpha-inhibitor (I-alpha-I) is composed of ITIH1/HC1, ITIH2/HC2 and bikunin. Interacts with TNFAIP6 (via Link and CUB domains). Post-translationally, heavy chains are linked to bikunin via chondroitin 4-sulfate esterified to the alpha-carboxyl of the C-terminal aspartate after propeptide cleavage. In terms of processing, the S-linked glycan is composed of two 6-carbon sugars, possibly Glc or Gal.

The protein resides in the secreted. Its function is as follows. May act as a carrier of hyaluronan in serum or as a binding protein between hyaluronan and other matrix protein, including those on cell surfaces in tissues to regulate the localization, synthesis and degradation of hyaluronan which are essential to cells undergoing biological processes. The protein is Inter-alpha-trypsin inhibitor heavy chain H1 (ITIH1) of Mesocricetus auratus (Golden hamster).